The primary structure comprises 248 residues: UPF0524 protein C3orf70 homolog (248 aa).

The segment at 169–248 (KESDTPKLGH…EVIETMETTV (80 aa)) is disordered. Acidic residues predominate over residues 200 to 227 (SCDEDTEEGAELSSEEDYSPESSWEPDE).

It belongs to the UPF0524 family.

May play a role in neuronal and neurobehavioral development. In Mus musculus (Mouse), this protein is UPF0524 protein C3orf70 homolog.